We begin with the raw amino-acid sequence, 236 residues long: ATP synthase subunit a (236 aa).

5 helical membrane passes run 18–38 (STVMMLLVAAIIVFLIAFIST), 79–99 (GITLIMFIAVSNLLGLPFSIV), 112–132 (DPTVTMTLATMILVLSHFYGV), 174–194 (IYAGEILLGLLAGLASSGAVG), and 205–227 (WQGFSIFIGFIQAFIFTMLTMVY).

This sequence belongs to the ATPase A chain family. F-type ATPases have 2 components, CF(1) - the catalytic core - and CF(0) - the membrane proton channel. CF(1) has five subunits: alpha(3), beta(3), gamma(1), delta(1), epsilon(1). CF(0) has three main subunits: a(1), b(2) and c(9-12). The alpha and beta chains form an alternating ring which encloses part of the gamma chain. CF(1) is attached to CF(0) by a central stalk formed by the gamma and epsilon chains, while a peripheral stalk is formed by the delta and b chains.

The protein resides in the cell membrane. Functionally, key component of the proton channel; it plays a direct role in the translocation of protons across the membrane. The polypeptide is ATP synthase subunit a (Lysinibacillus sphaericus (strain C3-41)).